A 101-amino-acid polypeptide reads, in one-letter code: Small ribosomal subunit protein uS14A (101 aa).

The interval 31 to 67 (LRRPSSTEAERLAAQRELRRQPRDASPTRVRNRDQID) is disordered. Residues 38–53 (EAERLAAQRELRRQPR) are compositionally biased toward basic and acidic residues.

Belongs to the universal ribosomal protein uS14 family. As to quaternary structure, part of the 30S ribosomal subunit. Contacts proteins S3 and S10.

Its function is as follows. Binds 16S rRNA, required for the assembly of 30S particles and may also be responsible for determining the conformation of the 16S rRNA at the A site. This is Small ribosomal subunit protein uS14A from Streptomyces coelicolor (strain ATCC BAA-471 / A3(2) / M145).